The primary structure comprises 213 residues: Motile sperm domain-containing protein 1 (213 aa).

In terms of domain architecture, MSP spans 16 to 143; the sequence is PVFVFPTELI…KEHLTESLFF (128 aa). 2 consecutive transmembrane segments (helical) span residues 159-179 and 191-211; these read SLLT…PTLG and LSVN…MAIL. The Nuclear export signal motif lies at 205–208; the sequence is LITM.

The protein resides in the endoplasmic reticulum membrane. The protein localises to the golgi apparatus membrane. Plays a role in differentiation and/or proliferation of mesenchymal stem cells. Proposed to be involved in epithelial-to-mesenchymal transition (EMT). However, another study suggests that it is not required for EMT or stem cell self-renewal and acts during later stages of differentiation. The chain is Motile sperm domain-containing protein 1 (MOSPD1) from Homo sapiens (Human).